Consider the following 209-residue polypeptide: FK506-binding protein 2B (209 aa).

The signal sequence occupies residues 1 to 19 (MRFSLLALLGTIVATSVSA). The 90-residue stretch at 47-136 (GDELSMHYTG…VFEVELLEIK (90 aa)) folds into the PPIase FKBP-type domain. The chain crosses the membrane as a helical span at residues 157–177 (FTSPSFLVSTGIIVALFLIVF). The stretch at 178 to 207 (KMAKKQDIAEANEKAAAATAEASTEKKEEK) forms a coiled coil. The disordered stretch occupies residues 190 to 209 (EKAAAATAEASTEKKEEKKE). The span at 200–209 (STEKKEEKKE) shows a compositional bias: basic and acidic residues.

Belongs to the FKBP-type PPIase family. FKBP2 subfamily.

The protein localises to the membrane. The enzyme catalyses [protein]-peptidylproline (omega=180) = [protein]-peptidylproline (omega=0). Inhibited by both FK506 and rapamycin. PPIases accelerate the folding of proteins. It catalyzes the cis-trans isomerization of proline imidic peptide bonds in oligopeptides. This is FK506-binding protein 2B (FKBP3) from Rhizopus delemar (strain RA 99-880 / ATCC MYA-4621 / FGSC 9543 / NRRL 43880) (Mucormycosis agent).